Reading from the N-terminus, the 618-residue chain is DNA mismatch repair protein MutL (618 aa).

The segment covering 366-381 has biased composition (low complexity); the sequence is AEPTAAREPATPRYSG. The interval 366-405 is disordered; sequence AEPTAAREPATPRYSGGTSGGNGGRQSAGGWPHAQPGYQK. Over residues 382–392 the composition is skewed to gly residues; that stretch reads GTSGGNGGRQS.

The protein belongs to the DNA mismatch repair MutL/HexB family.

Its function is as follows. This protein is involved in the repair of mismatches in DNA. It is required for dam-dependent methyl-directed DNA mismatch repair. May act as a 'molecular matchmaker', a protein that promotes the formation of a stable complex between two or more DNA-binding proteins in an ATP-dependent manner without itself being part of a final effector complex. This Salmonella agona (strain SL483) protein is DNA mismatch repair protein MutL.